A 178-amino-acid chain; its full sequence is Large ribosomal subunit protein uL6 (178 aa).

The interval 159-178 (GKGIRYEGEHVRRKEGKTGK) is disordered.

It belongs to the universal ribosomal protein uL6 family. Part of the 50S ribosomal subunit.

This protein binds to the 23S rRNA, and is important in its secondary structure. It is located near the subunit interface in the base of the L7/L12 stalk, and near the tRNA binding site of the peptidyltransferase center. The protein is Large ribosomal subunit protein uL6 of Listeria monocytogenes serotype 4b (strain CLIP80459).